The chain runs to 137 residues: Protein LTO1 homolog (137 aa).

The residue at position 2 (A2) is an N-acetylalanine. Residues 22–58 (GYQEGYEEGSSLGIVEGKRYGMVHGAKIGSEIGCYRG) form a deca-GX3 motif; required for interaction with YAE1 and the CIA complex region.

Belongs to the LTO1 family. Forms a complex with YAE1. Interacts with PYCR1 and PYCR2.

The protein localises to the nucleus. Its function is as follows. The complex LTO1:YAE1 functions as a target specific adapter that probably recruits apo-ABCE1 to the cytosolic iron-sulfur protein assembly (CIA) complex machinery. May be required for biogenesis of the large ribosomal subunit and initiation of translation. May play a role in the regulation of proline metabolism and ROS production. This Mus musculus (Mouse) protein is Protein LTO1 homolog.